The chain runs to 213 residues: Pyrrolidone-carboxylate peptidase (213 aa).

Catalysis depends on residues Glu78, Cys141, and His165.

It belongs to the peptidase C15 family. In terms of assembly, homotetramer.

The protein resides in the cytoplasm. It catalyses the reaction Release of an N-terminal pyroglutamyl group from a polypeptide, the second amino acid generally not being Pro.. Its function is as follows. Removes 5-oxoproline from various penultimate amino acid residues except L-proline. The protein is Pyrrolidone-carboxylate peptidase of Staphylococcus carnosus (strain TM300).